A 101-amino-acid polypeptide reads, in one-letter code: Phosphoribosyl-AMP cyclohydrolase (101 aa).

Residue Asp71 coordinates Mg(2+). Residue Cys72 coordinates Zn(2+). The Mg(2+) site is built by Asp73 and Asp75. 2 residues coordinate Zn(2+): Cys88 and Cys95.

Belongs to the PRA-CH family. In terms of assembly, homodimer. Requires Mg(2+) as cofactor. Zn(2+) serves as cofactor.

It localises to the cytoplasm. It carries out the reaction 1-(5-phospho-beta-D-ribosyl)-5'-AMP + H2O = 1-(5-phospho-beta-D-ribosyl)-5-[(5-phospho-beta-D-ribosylamino)methylideneamino]imidazole-4-carboxamide. It functions in the pathway amino-acid biosynthesis; L-histidine biosynthesis; L-histidine from 5-phospho-alpha-D-ribose 1-diphosphate: step 3/9. Functionally, catalyzes the hydrolysis of the adenine ring of phosphoribosyl-AMP. The sequence is that of Phosphoribosyl-AMP cyclohydrolase from Bacillus cereus (strain ATCC 10987 / NRS 248).